The sequence spans 364 residues: Aminomethyltransferase (364 aa).

The protein belongs to the GcvT family. As to quaternary structure, the glycine cleavage system is composed of four proteins: P, T, L and H.

It catalyses the reaction N(6)-[(R)-S(8)-aminomethyldihydrolipoyl]-L-lysyl-[protein] + (6S)-5,6,7,8-tetrahydrofolate = N(6)-[(R)-dihydrolipoyl]-L-lysyl-[protein] + (6R)-5,10-methylene-5,6,7,8-tetrahydrofolate + NH4(+). The glycine cleavage system catalyzes the degradation of glycine. This Staphylococcus carnosus (strain TM300) protein is Aminomethyltransferase.